Here is a 243-residue protein sequence, read N- to C-terminus: Ubiquinone biosynthesis O-methyltransferase (243 aa).

S-adenosyl-L-methionine contacts are provided by arginine 45, glycine 65, aspartate 86, and leucine 130.

This sequence belongs to the methyltransferase superfamily. UbiG/COQ3 family.

It catalyses the reaction a 3-demethylubiquinol + S-adenosyl-L-methionine = a ubiquinol + S-adenosyl-L-homocysteine + H(+). It carries out the reaction a 3-(all-trans-polyprenyl)benzene-1,2-diol + S-adenosyl-L-methionine = a 2-methoxy-6-(all-trans-polyprenyl)phenol + S-adenosyl-L-homocysteine + H(+). Its pathway is cofactor biosynthesis; ubiquinone biosynthesis. In terms of biological role, O-methyltransferase that catalyzes the 2 O-methylation steps in the ubiquinone biosynthetic pathway. The chain is Ubiquinone biosynthesis O-methyltransferase from Idiomarina loihiensis (strain ATCC BAA-735 / DSM 15497 / L2-TR).